Here is a 357-residue protein sequence, read N- to C-terminus: Velvet complex subunit 2 (357 aa).

The Velvet domain occupies 32–341 (RRAERKYKLE…AQQGIKIPIR (310 aa)).

This sequence belongs to the velvet family. VelB subfamily. As to quaternary structure, component of the heterotrimeric velvet complex composed of LAE1, VEL1 and VEL2; VEL1A acting as a bridging protein between LAE1 and VEL2. Forms a heterodimeric complex with VOS1; the formation of the VEL2-VOS1 complex is light-dependent.

The protein resides in the nucleus. It localises to the cytoplasm. Functionally, component of the velvet transcription factor complex that controls sexual/asexual developmental ratio in response to light, promoting sexual development in the darkness while stimulating asexual sporulation under illumination. The velvet complex acts as a global regulator for secondary metabolite gene expression. Component of the VEL2-VOS1 heterodimeric complex that plays a dual role in activating genes associated with spore maturation and repressing certain development-associated genes. The complex binds DNA through the DNA-binding domain of VOS1 that recognizes an 11-nucleotide consensus sequence 5'-CTGGCCGCGGC-3' consisting of two motifs in the promoters of key developmental regulatory genes. The VEL2-VOS1 complex is required for normal pseudothecium development and regulates asexual spore compartmentalization, pigmentation and germination. This is Velvet complex subunit 2 from Cochliobolus heterostrophus (strain C5 / ATCC 48332 / race O) (Southern corn leaf blight fungus).